The primary structure comprises 667 residues: Autophagy-related protein 20 (667 aa).

The segment at 1 to 94 is disordered; the sequence is MKQKKNRFGS…DESFKSTRAN (94 aa). Residues 38–47 show a composition bias toward low complexity; the sequence is SSSSRSSSTQ. Residues 55 to 67 show a composition bias toward polar residues; sequence SLASVHTSDMHQS. The span at 76-85 shows a compositional bias: acidic residues; it reads DDNPFLDQDD. The region spanning 185-331 is the PX domain; that stretch reads KLINDRVQIL…DFLDPNNINW (147 aa). The a 1,2-diacyl-sn-glycero-3-phospho-(1D-myo-inositol-3-phosphate) site is built by Arg222, Ser224, Lys248, and Arg297. The tract at residues 524 to 562 is disordered; that stretch reads ELQRGVQPRNGNTASGASGNDESSVKKPQASKSQSSSYG. Positions 532-545 are enriched in polar residues; that stretch reads RNGNTASGASGNDE. A compositionally biased stretch (low complexity) spans 549 to 560; it reads KKPQASKSQSSS. Positions 588–652 form a coiled coil; it reads QTTMANLIKE…SKYLKDYAKK (65 aa).

It belongs to the sorting nexin family.

Its subcellular location is the endosome membrane. The protein resides in the preautophagosomal structure membrane. Functionally, required for cytoplasm to vacuole transport (Cvt), pexophagy and mitophagy. Also involved in endoplasmic reticulum-specific autophagic process and is essential for the survival of cells subjected to severe ER stress. Functions in protein retrieval from the endocytic pathway. The polypeptide is Autophagy-related protein 20 (ATG20) (Vanderwaltozyma polyspora (strain ATCC 22028 / DSM 70294 / BCRC 21397 / CBS 2163 / NBRC 10782 / NRRL Y-8283 / UCD 57-17) (Kluyveromyces polysporus)).